Here is a 305-residue protein sequence, read N- to C-terminus: Homeobox protein ceh-23 (305 aa).

2 disordered regions span residues 113–140 (ASCP…ERRR) and 262–305 (RRSK…KVLN). The span at 120-135 (ASSQATVTLQVPSTGS) shows a compositional bias: polar residues. The homeobox DNA-binding region spans 211–270 (HRKARTIYGTTQTQQLEDMFKGQMYVVGAERENLAQRLGLSPSQVRIWFQNRRSKHRRKQ). A compositionally biased stretch (acidic residues) spans 287–305 (GKDEEEDDEEDEDDVKVLN).

The protein belongs to the distal-less homeobox family.

It is found in the nucleus. Probable transcription factor. Required for differentiation of AIY interneurons, acting downstream of LIM/homeobox protein ttx-3. Modulates gene expression, acting downstream of AMP kinase aak-2/AMPK signaling. Modulates lifespan. The protein is Homeobox protein ceh-23 (ceh-23) of Caenorhabditis elegans.